The sequence spans 560 residues: Embryonal Fyn-associated substrate (560 aa).

The SH3 domain occupies 5–68 (TSAQLARALY…PANRVKLLPA (64 aa)). Disordered regions lie at residues 176–219 (VVPQ…LYAA) and 241–372 (ANGE…NEYE). Over residues 198–210 (AELERDPEWEGGR) the composition is skewed to basic and acidic residues. Residue Tyr-253 is modified to Phosphotyrosine; by SRC. Residues 259 to 268 (GPEPPSPEPP) show a composition bias toward pro residues. 2 short sequence motifs (SH3-binding) span residues 304–310 (RPLPALP) and 334–340 (RPLPPPP). Over residues 305-315 (PLPALPVSEAP) the composition is skewed to low complexity. Over residues 351–361 (PEGDPECREVA) the composition is skewed to basic and acidic residues. Residues 437–487 (FYAGQCQSHYSALQAAVAALVASTQANQPPCLFVPHGKRVVVAAHRLVFVG) are divergent helix-loop-helix motif.

It belongs to the CAS family. Phosphorylated on multiple tyrosine residues. Phosphorylated on tyrosines by FYN and SRC. In terms of tissue distribution, widely expressed. Higher levels found in placenta and embryo. Lower levels found in brain, brainstem, muscle and lung. No expression in liver and intestine.

In terms of biological role, docking protein which plays a central coordinating role for tyrosine-kinase-based signaling related to cell adhesion. May serve as an activator of SRC and a downstream effector. Interacts with the SH3 domain of FYN and with CRK, SRC, and YES. The polypeptide is Embryonal Fyn-associated substrate (Efs) (Mus musculus (Mouse)).